The primary structure comprises 312 residues: MKLLNQSQVSEFILLGLTSSQDVEFLLFALFSVIYVVTVLGNLLIIVTVFNTPNLNTPMYFLLGNLSFVDMTLASFATPKVILNLLKKQKVISFAGCFTQIFLLHLLGGVEMVLLVSMAFDRYVAICKPLHYMTIMNKKVCVLLVVTSWLLGLLHSGFQIPFAVNLPFCGPNVVDSIFCDLPLVTKLACIDIYFVQVVIVANSGIISLSCFIILLISYSLILITIKNHSPTGQSKARSTLTAHITVVILFFGPCIFIYIWPFGNHSVDKFLAVFYTIITPILNPIIYTLRNKEMKISMKKLWRAFVNSREDT.

Topologically, residues 1–25 (MKLLNQSQVSEFILLGLTSSQDVEF) are extracellular. N5 carries N-linked (GlcNAc...) asparagine glycosylation. The helical transmembrane segment at 26-49 (LLFALFSVIYVVTVLGNLLIIVTV) threads the bilayer. Topologically, residues 50-57 (FNTPNLNT) are cytoplasmic. The helical transmembrane segment at 58 to 79 (PMYFLLGNLSFVDMTLASFATP) threads the bilayer. Residues 80-100 (KVILNLLKKQKVISFAGCFTQ) lie on the Extracellular side of the membrane. C97 and C189 are oxidised to a cystine. Residues 101–120 (IFLLHLLGGVEMVLLVSMAF) traverse the membrane as a helical segment. Topologically, residues 121–139 (DRYVAICKPLHYMTIMNKK) are cytoplasmic. Residues 140-158 (VCVLLVVTSWLLGLLHSGF) traverse the membrane as a helical segment. The Extracellular portion of the chain corresponds to 159–195 (QIPFAVNLPFCGPNVVDSIFCDLPLVTKLACIDIYFV). The chain crosses the membrane as a helical span at residues 196–219 (QVVIVANSGIISLSCFIILLISYS). Topologically, residues 220-235 (LILITIKNHSPTGQSK) are cytoplasmic. The helical transmembrane segment at 236–258 (ARSTLTAHITVVILFFGPCIFIY) threads the bilayer. Residues 259–269 (IWPFGNHSVDK) lie on the Extracellular side of the membrane. N264 is a glycosylation site (N-linked (GlcNAc...) asparagine). The helical transmembrane segment at 270 to 289 (FLAVFYTIITPILNPIIYTL) threads the bilayer. Residues 290-312 (RNKEMKISMKKLWRAFVNSREDT) lie on the Cytoplasmic side of the membrane.

Belongs to the G-protein coupled receptor 1 family.

Its subcellular location is the cell membrane. Its function is as follows. Odorant receptor. This is Olfactory receptor 4K17 (OR4K17) from Homo sapiens (Human).